The sequence spans 243 residues: Small ribosomal subunit protein eS4 (243 aa).

The S4 RNA-binding domain maps to 43–105 (IPLLYIVRDY…TGEHYRVLPN (63 aa)).

Belongs to the eukaryotic ribosomal protein eS4 family.

The sequence is that of Small ribosomal subunit protein eS4 (rps4e) from Pyrococcus abyssi (strain GE5 / Orsay).